We begin with the raw amino-acid sequence, 152 residues long: Transcriptional repressor NrdR (152 aa).

Residues 3 to 34 (CPFCGHADTQVVDSRVSEDGASIRRRRRCLEC) fold into a zinc finger. Residues 49 to 139 (PQVVKQDGHR…VYRSFQDVAE (91 aa)) form the ATP-cone domain.

Belongs to the NrdR family. It depends on Zn(2+) as a cofactor.

Functionally, negatively regulates transcription of bacterial ribonucleotide reductase nrd genes and operons by binding to NrdR-boxes. This is Transcriptional repressor NrdR from Laribacter hongkongensis (strain HLHK9).